A 514-amino-acid chain; its full sequence is MLSNNPLITKFRELFTVALVLALLSGCQWQDDNLTDLEKIRESGVIRVGTLNNQLSYYIGNDGPTGLDYELAQRFAQKLGVKLEMQPMFTLSGLFPTLERGGIDVVAAGLTISKDRIENYHAAPAYYYASQIVVYKNGQWRPRKPADLALNKGTLSVVKGSSHEKHLIKLKEIHPDLTWESIEETDSDELLRLVAKGELDFTIADSVDVALSQRIHPDVAIAMELTEDEPIAWFVNKSTDDSLYALLIEFFGEIKQSGELAQLEEKYFGHVGSFDYVDTRAFLRAIESKLPRWESLFKKYSNEFDWRLIAALSYQESHWNPQAVSPTGVRGMMMLTLPTAKSVGVKNRLDPEQSIRGGAEYLRKMISRVPDSIESHEKVWFALASYNVGFGHMMDARRLTHKQGGNQDTWTDVKQRLPLLRQRKYYQQSRYGYARGDEALNYVENIRRYYQSIIGYEQAHSHDYDSDDVQVVDGLQTITLPPVPPRQANVDGSLNNEAAISSAEKTIEDPGPSQ.

A signal peptide spans 1-30; that stretch reads MLSNNPLITKFRELFTVALVLALLSGCQWQ. The non-LT domain stretch occupies residues 31 to 271; that stretch reads DDNLTDLEKI…QLEEKYFGHV (241 aa). The LT domain stretch occupies residues 272-514; sequence GSFDYVDTRA…KTIEDPGPSQ (243 aa). Residue Glu-316 is part of the active site. The segment at 482 to 514 is disordered; the sequence is PVPPRQANVDGSLNNEAAISSAEKTIEDPGPSQ. The span at 490–499 shows a compositional bias: polar residues; that stretch reads VDGSLNNEAA.

In the N-terminal section; belongs to the bacterial solute-binding protein 3 family. This sequence in the C-terminal section; belongs to the transglycosylase Slt family.

Its subcellular location is the cell outer membrane. The catalysed reaction is Exolytic cleavage of the (1-&gt;4)-beta-glycosidic linkage between N-acetylmuramic acid (MurNAc) and N-acetylglucosamine (GlcNAc) residues in peptidoglycan, from either the reducing or the non-reducing ends of the peptidoglycan chains, with concomitant formation of a 1,6-anhydrobond in the MurNAc residue.. Functionally, murein-degrading enzyme that degrades murein glycan strands and insoluble, high-molecular weight murein sacculi, with the concomitant formation of a 1,6-anhydromuramoyl product. Lytic transglycosylases (LTs) play an integral role in the metabolism of the peptidoglycan (PG) sacculus. Their lytic action creates space within the PG sacculus to allow for its expansion as well as for the insertion of various structures such as secretion systems and flagella. This is Membrane-bound lytic murein transglycosylase F from Photobacterium profundum (strain SS9).